Consider the following 685-residue polypeptide: MSTPFGLDLGNNNSVLAVARNRGIDIVVNEVSNRSTPSLVGFGQKNRFLGEAGKTKETSNIKNTVGNLKRIVGLDYTHPDFSTESQFFSSKLVELDDKKVGTQVRLAGESKTFSATQLAAMFIGKVKNTVQQETKSNINDICIAVPAWYSEEQRYSIADAAKVAGLNPVRIVNDVTAAAVSYGVFKTDLPEGDAKPRIVAFVDIGHSSYTCSIMAFKKGELKVLGTAYDKHFGGRDFDRAITEHFADEFKSKYKIDIRTNAKAYNRILTAAEKLKKVLSANTQAPFSAESVMDDVDVSSSMTREELEELVKPLLTRVTEPVTKALAQANLTVEDIDFVEIIGGTTRIPTLKNSISEAFNKPLSTTLNQDEAIAKGAAFICAIHSPTLRVRPFKFEDIHPYSVSYSWDKQVEEEESMEVFPAGSTFPSTKLITLQRTGDFQMSAYYTTPEQLPKGTKADIAKWEITGLQVPEGAESVPVKVVLRCDPSGLHTIEEAYTVEDIKVQEVVPLPEDAPEDAEPEFREVTKTVKKDALTIVAHTFALEGKPLNDLIEKENAMFAQDKLVAETEDRKNALEEYIYTLRGKLEEEYAPFASEAEKTKLTGMLAKAEEWLYDEGYDSIKAKYIAKYEELASLGNMIRGRYLAKEEEKRQALRSNQEASKMADLSAKLAAQRKAEAEAKENAKE.

The tract at residues 651-685 (QALRSNQEASKMADLSAKLAAQRKAEAEAKENAKE) is disordered. A compositionally biased stretch (basic and acidic residues) spans 673 to 685 (RKAEAEAKENAKE).

This sequence belongs to the heat shock protein 70 family.

It is found in the cytoplasm. The sequence is that of Heat shock protein homolog SSE1 (SSE1) from Naumovozyma castellii (Yeast).